Here is a 519-residue protein sequence, read N- to C-terminus: MLLKEIIREELEEDYYNYYNNLGEYSTGKGDDIKEITNNSQNKTNNNNNITILTSYNYNNNNNNNNNNNNNNNNNNNNNNNNNNNNNNNNNNNNNLFVSHSSILRSSSSPSSSESDEYSNGNNNNNSIINDLSSSSSSSSSSSSSSSSSITSPSSNHAYSPYNRSHKGIKISPNNKQVSSSGLLGSTMVSTSLIMGASNINNNNNNNNNNNNNNNNNNNNNNNNNNNNNNINIINNSNTNNNSSNSNNTINTFNFNNNLNNLNSINNNLNNYSNNMNINNQHNHQFNHYNNNNNNNNNNNNNNSDNNNIHFSNNGNMNIYNPNLSNFNNNNNNNNNNNNNNNNNNNNSNINNNNNNNKQIGNIVAKDDAEQLKESWKKIKEISNEFIKLSKLATKSDLQSIDLIPELRSKVMDLNNFLHVIEEKGELLKTDERQQKKRMESDKNAEKREKRREASRLLNNVCRNCKTTETPEWRKGPDGTKSLCNACGLHYAKNVKREAAGLHHLNEVGKKVDLTSILN.

Disordered regions lie at residues 25–182 (YSTG…SSSG), 198–249 (SNIN…SNNT), 273–359 (SNNM…NNKQ), and 431–453 (DERQQKKRMESDKNAEKREKRRE). Positions 37 to 156 (TNNSQNKTNN…SSSITSPSSN (120 aa)) are enriched in low complexity. Residues 172-182 (SPNNKQVSSSG) are compositionally biased toward polar residues. A compositionally biased stretch (low complexity) spans 273 to 357 (SNNMNINNQH…SNINNNNNNN (85 aa)). The stretch at 429–461 (KTDERQQKKRMESDKNAEKREKRREASRLLNNV) forms a coiled coil. The GATA-type zinc-finger motif lies at 462 to 487 (CRNCKTTETPEWRKGPDGTKSLCNAC).

The polypeptide is GATA zinc finger domain-containing protein 8 (gtaH) (Dictyostelium discoideum (Social amoeba)).